The chain runs to 114 residues: U17-barytoxin-Tl1a (114 aa).

Residues 1-20 (MKTIIVFLSLLVLATKFGDA) form the signal peptide. A propeptide spanning residues 21–74 (NEGVNQEQMKEVIQNEFREDFLNEMAPMSLLQQLEAIESTLLEKEADRNSRQKR) is cleaved from the precursor. 3 disulfide bridges follow: C75-C88, C82-C93, and C87-C108.

It belongs to the neurotoxin 14 (magi-1) family. 03 (ICK-30-40) subfamily. Expressed by the venom gland.

Its subcellular location is the secreted. Its function is as follows. Ion channel inhibitor. This Trittame loki (Brush-footed trapdoor spider) protein is U17-barytoxin-Tl1a.